Reading from the N-terminus, the 109-residue chain is Anther-specific protein MZm3-3 (109 aa).

The N-terminal stretch at methionine 1–alanine 41 is a signal peptide. Disulfide bonds link cysteine 45–cysteine 86, cysteine 55–cysteine 75, cysteine 76–cysteine 101, and cysteine 88–cysteine 108.

It belongs to the A9/FIL1 family. In terms of tissue distribution, tapetum of anthers.

It is found in the secreted. The sequence is that of Anther-specific protein MZm3-3 from Zea mays (Maize).